The chain runs to 83 residues: MKASMFLALAGLVLLFVVGYASESEEKDFPRELLSKIFAVDDFKGEERGCKGFGDSCTPGKNECCPNYACSSKHKWCKVYLGK.

Positions 1-21 (MKASMFLALAGLVLLFVVGYA) are cleaved as a signal peptide. The propeptide occupies 22–48 (SESEEKDFPRELLSKIFAVDDFKGEER). 3 disulfides stabilise this stretch: Cys-50–Cys-65, Cys-57–Cys-70, and Cys-64–Cys-77. A Leucine amide modification is found at Leu-81.

This sequence belongs to the neurotoxin 10 (Hwtx-1) family. 15 (Hntx-3) subfamily. Monomer. Expressed by the venom gland.

It is found in the secreted. Functionally, selective antagonist of neuronal tetrodotoxin (TTX)-sensitive voltage-gated sodium channels (IC(50)=1270 nM on Nav1.1/SCN1A, 270 nM on Nav1.2/SCN2A, 491 nM on Nav1.3/SCN3A and 232 nM on Nav1.7/SCN9A). This toxin suppress Nav1.7 current amplitude without significantly altering the activation, inactivation, and repriming kinetics. Short extreme depolarizations partially activate the toxin-bound channel, indicating voltage-dependent inhibition of this toxin. This toxin increases the deactivation of the Nav1.7 current after extreme depolarizations. The toxin-Nav1.7 complex is gradually dissociated upon prolonged strong depolarizations in a voltage-dependent manner, and the unbound toxin rebinds to Nav1.7 after a long repolarization. Moreover, analysis of chimeric channels showed that the DIIS3-S4 linker is critical for toxin binding to Nav1.7. These data are consistent with this toxin interacting with Nav1.7 site 4 and trapping the domain II voltage sensor in the closed state. The chain is Hainantoxin-III 11 from Cyriopagopus hainanus (Chinese bird spider).